Here is a 447-residue protein sequence, read N- to C-terminus: 3-phosphoshikimate 1-carboxyvinyltransferase (447 aa).

The disordered stretch occupies residues 1 to 22 (MTPSLKRLSGAMRARPAPALSG). 3-phosphoshikimate is bound by residues K30, S31, and R35. K30 serves as a coordination point for phosphoenolpyruvate. 2 residues coordinate phosphoenolpyruvate: G102 and R130. The 3-phosphoshikimate site is built by S173, Q175, D325, and K352. Q175 is a binding site for phosphoenolpyruvate. D325 serves as the catalytic Proton acceptor. Phosphoenolpyruvate-binding residues include R356 and R401.

It belongs to the EPSP synthase family. As to quaternary structure, monomer.

The protein localises to the cytoplasm. The catalysed reaction is 3-phosphoshikimate + phosphoenolpyruvate = 5-O-(1-carboxyvinyl)-3-phosphoshikimate + phosphate. The protein operates within metabolic intermediate biosynthesis; chorismate biosynthesis; chorismate from D-erythrose 4-phosphate and phosphoenolpyruvate: step 6/7. In terms of biological role, catalyzes the transfer of the enolpyruvyl moiety of phosphoenolpyruvate (PEP) to the 5-hydroxyl of shikimate-3-phosphate (S3P) to produce enolpyruvyl shikimate-3-phosphate and inorganic phosphate. This chain is 3-phosphoshikimate 1-carboxyvinyltransferase, found in Maricaulis maris (strain MCS10) (Caulobacter maris).